Reading from the N-terminus, the 104-residue chain is Vacuolar ATPase assembly integral membrane protein VMA21 (104 aa).

The Cytoplasmic portion of the chain corresponds to M1–A21. The chain crosses the membrane as a helical span at residues V22–F42. Residues S43–T65 lie on the Lumenal side of the membrane. Residues F66–A86 traverse the membrane as a helical segment. The Cytoplasmic portion of the chain corresponds to F87–S104. Positions K101–S104 match the Prevents secretion from ER motif.

Belongs to the VMA21 family.

The protein resides in the endoplasmic reticulum membrane. It localises to the endoplasmic reticulum-Golgi intermediate compartment membrane. It is found in the cytoplasmic vesicle. The protein localises to the COPII-coated vesicle membrane. Required for the assembly of the V0 complex of the vacuolar ATPase (V-ATPase) in the endoplasmic reticulum. This Cryptococcus neoformans var. neoformans serotype D (strain B-3501A) (Filobasidiella neoformans) protein is Vacuolar ATPase assembly integral membrane protein VMA21.